Reading from the N-terminus, the 452-residue chain is Lysine-rich nucleolar protein 1 (452 aa).

3 disordered regions span residues 1–28 (MITK…VKEP), 55–161 (VIQE…AFSG), and 184–305 (REQA…PDTD). Residue Lys7 forms a Glycyl lysine isopeptide (Lys-Gly) (interchain with G-Cter in SUMO2) linkage. Residues 65–75 (LVKKKKKKKGH) are compositionally biased toward basic residues. Residues 78–98 (ICEEHLEPEITLRAGRTERSH) are compositionally biased toward basic and acidic residues. Ser112 is subject to Phosphoserine. Lys126 is covalently cross-linked (Glycyl lysine isopeptide (Lys-Gly) (interchain with G-Cter in SUMO2)). Residues 127 to 139 (TSPDPRQDEEVTR) show a composition bias toward basic and acidic residues. Ser128 is modified (phosphoserine). 2 stretches are compositionally biased toward basic residues: residues 140 to 151 (VGKKLKKHKKEK) and 258 to 267 (SVKKKVKSKK). Phosphoserine is present on Ser258. Lys280 is covalently cross-linked (Glycyl lysine isopeptide (Lys-Gly) (interchain with G-Cter in SUMO2)). Acidic residues predominate over residues 293–305 (VAEEPWEEEPDTD). The interval 300–452 (EEPDTDLEVV…NASKSIKFED (153 aa)) is interaction with ZNF106. Thr304 is modified (phosphothreonine). Residues Lys313, Lys347, Lys367, Lys369, and Lys401 each participate in a glycyl lysine isopeptide (Lys-Gly) (interchain with G-Cter in SUMO2) cross-link. Arg424 carries the post-translational modification Omega-N-methylarginine. Lys436 participates in a covalent cross-link: Glycyl lysine isopeptide (Lys-Gly) (interchain with G-Cter in SUMO2).

In terms of assembly, interacts with ZNF106.

Its subcellular location is the nucleus. It is found in the nucleolus. This chain is Lysine-rich nucleolar protein 1 (KNOP1), found in Bos taurus (Bovine).